A 256-amino-acid chain; its full sequence is Hydroxypyruvate/pyruvate aldolase (256 aa).

H48 serves as the catalytic Proton acceptor. A divalent metal cation is bound by residues E152 and D178.

This sequence belongs to the HpcH/HpaI aldolase family. Requires a divalent metal cation as cofactor.

The catalysed reaction is D-glyceraldehyde + pyruvate = 2-dehydro-3-deoxy-L-galactonate. Its function is as follows. Aldolase which can catalyze in vitro the aldolisation reaction between hydroxypyruvate (HPA) or pyruvate (PA) and D-glyceraldehyde (D-GA). The condensation of pyruvate and D-glyceraldehyde produces 2-dehydro-3-deoxy-L-galactonate as the major product. Has weak activity with hydroxypyruvate and D-glyceraldehyde. The sequence is that of Hydroxypyruvate/pyruvate aldolase from Roseobacter denitrificans (strain ATCC 33942 / OCh 114) (Erythrobacter sp. (strain OCh 114)).